We begin with the raw amino-acid sequence, 508 residues long: Cell death protein 3 (508 aa).

Residues Met-1–Asp-223 constitute a propeptide that is removed on maturation. Residues Met-2–Leu-91 form the CARD domain. 2 disordered regions span residues Pro-106–His-130 and Tyr-148–Asn-184. Residues Leu-118 to Thr-127 are compositionally biased toward polar residues. Residues Ser-171–Asn-184 show a composition bias toward low complexity. Catalysis depends on residues His-317 and Cys-360. Residues Gly-392–Gln-407 are required for interaction with ced-4.

Belongs to the peptidase C14A family. The active form is probably a heterodimer of the p17 subunit with either the p15 or p13 subunit which are all derived from the precursor by autocatalysis. Interacts with octameric ced-4 (two ced-3 zymogens per one ced-4 octamer); the interaction causes the autoproteolytic cleavage and activation of ced-3. Processed ced-3 also interacts with ced-4 octamer to form a stable holoenzyme. Interacts (via large subunit p17) with csp-3; the interaction prevents ced-3 autoactivation and delays ced-4-induced ced-3 processing. Interacts (via large subunit p17 or small subunit p13 or p15) with csp-2; the interaction inhibits ced-3 autoactivation. Interacts (via propeptide) with nucleoporin npp-14; the interaction tethers ced-3 to the nuclear membrane and prevents its autoprocessing in absence of ced-4. Interacts with dct-1. May form a complex composed of ced-3, ced-4 and mac-1. Post-translationally, autocatalytic cleavage removes the propeptide and generates the catalytic subunit p17 and two non-catalytic subunits p15 and p13; autoproteolysis is induced by ced-4 oligomer. Cleaved by caspase csp-1 probably at Asp-146 and Asp-376.

It localises to the nucleus membrane. It is found in the perikaryon. Its subcellular location is the synapse. The protein localises to the mitochondrion. The protein resides in the cytoplasm. It localises to the perinuclear region. The catalysed reaction is Strict requirement for an Asp residue at position P1 and has a preferred cleavage sequence of Asp-Glu-Val-Asp-|-.. Octameric ced-4 activates zymogen autoprocessing and enhances activity of processed ced-3. Zymogen autoactivation is inhibited by csp-3. csp-3 has no effect on active ced-3. Zymogen autoactivation is inhibited by csp-2. Inhibited by cysteine protease inhibitor iodoacetic acid (CH3COOI). Inhibited by benzyloxycarbonyl-DEVD-fluoro-methyl ketone (zDEVD-fmk). Inhibited by benzyloxycarbonyl-VAD-fluoro-methyl ketone (zVAD-fmk). Not inhibited by N-[N-(L-3-transcarboxirane-2-carbonyl)-leucyl]-agmatine (E-64) or by the serine and cysteine protease inhibitor L-1-chloro-3-[4-to-osylamido]-7-amino-2-heptanone (TLCK). Acts as a cysteine protease in controlling programmed cell death (apoptosis) by proteolytically activating or inactivating a wide range of substrates. Component of the egl-1, ced-9, ced-4 and ced-3 apoptotic signaling cascade required for the initiation of programmed cell death in cells fated to die during embryonic and postembryonic development. During oogenesis, required for germline apoptosis downstream of ced-9 and ced-4 but independently of egl-1. By cleaving and activating ced-8, promotes phosphatidylserine exposure on the surface of apoptotic cells; phosphatidylserine is a specific marker only present at the surface of apoptotic cells and acts as a specific signal for engulfment. By cleaving and converting dcr-1 into a deoxyribonuclease (DNase), promotes apoptotic chromosomal DNA fragmentation. By cleaving mitochondrial fission protein drp-1, may regulate the removal of mitochondria during apoptosis. During germline apoptosis, cleaves translation initiation factor ifg-1 (isoform p170) promoting cap-independent translation. During male tail morphogenesis, promotes apoptosis of the tail-spike cell downstream of ced-4 but independently of egl-1 and ced-9. By cleaving cnt-1, prevents the activation of the prosurvival akt-1/2 signaling pathway and thus promotes apoptosis. Downstream of ced-4, may play a role in sex-specific cell apoptosis by cleaving sex-determining protein fem-1. May regulate germline apoptosis in response to DNA damage, probably downstream of let-60/ras and mpk-1 pathway. Cleaves ced-9 in vitro. Cleaves csp-2 isoform b resulting in the removal of the propeptide and the generation of csp-2 subunit p31 in vitro. Independently of its apoptotic role has additional functions. Probably by cleaving and thereby activating actin-severing protein gsnl-1, required for the elimination of transient presynaptic components during larval development downstream of egl-1, ced-9 and ced-4 pathway. Together with ain-1, a component of the miRNA-induced-silencing complex (miRISC), regulates temporal cell fate patterning during larval development. Acts in cell fate patterning by cleaving heterochronic protein lin-28, likely promoting its degradation. Also cleaves heterochronic protein lin-14 and exonuclease disl-2 in vitro. Downstream of calreticulin crt-1 and ced-4 and independently of egl-1 and ced-9, plays a role in the initial steps of axonal regrowth following axotomy. Cleaves 14-3-3-like protein ftt-2, tubulin tbb-2 and calreticulin crt-1 in vitro. Plays also a role in resistance to S.typhimurium-mediated infection. This is Cell death protein 3 from Caenorhabditis remanei (Caenorhabditis vulgaris).